The following is a 189-amino-acid chain: Large ribosomal subunit protein bL17 (189 aa).

The tract at residues 126–189 is disordered; it reads DRARRVKASQ…DADADEAPQN (64 aa). Positions 139-180 are enriched in low complexity; it reads QDAPSEPQAAEEPAAEEAVAATEAVAAPADAEATDAEAGSAD.

It belongs to the bacterial ribosomal protein bL17 family. Part of the 50S ribosomal subunit. Contacts protein L32.

This Mycobacterium marinum (strain ATCC BAA-535 / M) protein is Large ribosomal subunit protein bL17.